Consider the following 653-residue polypeptide: Fructose-1,6-bisphosphatase class 3 (653 aa).

This sequence belongs to the FBPase class 3 family. Mn(2+) is required as a cofactor.

It carries out the reaction beta-D-fructose 1,6-bisphosphate + H2O = beta-D-fructose 6-phosphate + phosphate. The protein operates within carbohydrate biosynthesis; gluconeogenesis. This is Fructose-1,6-bisphosphatase class 3 from Listeria monocytogenes serotype 4b (strain CLIP80459).